A 96-amino-acid chain; its full sequence is Small ribosomal subunit protein uS19 (96 aa).

Belongs to the universal ribosomal protein uS19 family.

Protein S19 forms a complex with S13 that binds strongly to the 16S ribosomal RNA. The sequence is that of Small ribosomal subunit protein uS19 from Solibacter usitatus (strain Ellin6076).